We begin with the raw amino-acid sequence, 206 residues long: Emopamil-binding protein-like (206 aa).

A run of 4 helical transmembrane segments spans residues 10–30 (EAGSSLLLCSALLAVGCALGL), 42–62 (WVLAWLCYDSLVHFVLEGAFV), 101–121 (LEILTVVLDGLLALVLIYAIV), and 165–185 (LWVYLVFFNGLWVLIPGLLLW). Positions 39-184 (VERWVLAWLC…LWVLIPGLLL (146 aa)) constitute an EXPERA domain.

The protein belongs to the EBP family. In terms of assembly, homodimer.

Its subcellular location is the endoplasmic reticulum membrane. Does not possess sterol isomerase activity and does not bind sigma ligands. This chain is Emopamil-binding protein-like (Ebpl), found in Mus musculus (Mouse).